The following is a 130-amino-acid chain: C-X-C motif chemokine 5 (130 aa).

Positions 1–37 (MSFQLRSSARIPSRSCSSFTLLAFLLLFTLPQHRAQA) are cleaved as a signal peptide. Cystine bridges form between C50–C76 and C52–C93.

The protein belongs to the intercrine alpha (chemokine CxC) family. Monomer. Homodimer.

Its subcellular location is the secreted. In terms of biological role, may participate in the recruitment of inflammatory cells by injured or infected tissue. The polypeptide is C-X-C motif chemokine 5 (Cxcl5) (Rattus norvegicus (Rat)).